Reading from the N-terminus, the 385-residue chain is MADQSSEIVNALSSEMEAVSVSSTQASSSSDGFQMSEEVEKRYKIVRSIGEECIQEEELKNLLAKKAAPICYDGFEPSGRMHIAQGVMKVINVNKMTSAGCRVKIWIADWFAQLNNKMGGDLKKIRVVGEYFQEIWKAAGMDNDKVEFLWSSEEINSKADKYWPLVMDIARKNKLPRILRCVQIMGRSETDELSAAQILYPCMQCADIFFLEADICQLGMDQRKVNVLAREYCDDIKRKNKPIILSHHMLPGLQQGQEKMSKSDPLSAIFMEDEEAEVNVKIKKAYCPPKVVKGNPCLEYIKYIILPWFDEFTVERNEEYGGNKTYKSFEDIAADYESGELHPGDLKKGLMNALNKILQPVRDHFKTDARAKNLLKQIKAYRVTR.

A 'HIGH' region motif is present at residues 77-85; the sequence is PSGRMHIAQ. Residues Tyr-200, Gln-204, Asp-207, and Gln-222 each contribute to the L-tyrosine site. Positions 259–263 match the 'KMSKS' region motif; it reads KMSKS. Lys-262 lines the ATP pocket.

This sequence belongs to the class-I aminoacyl-tRNA synthetase family.

The protein resides in the cytoplasm. It is found in the cytosol. It carries out the reaction tRNA(Tyr) + L-tyrosine + ATP = L-tyrosyl-tRNA(Tyr) + AMP + diphosphate + H(+). Its function is as follows. Catalyzes the attachment of tyrosine to tRNA(Tyr) in a two-step reaction: tyrosine is first activated by ATP to form Tyr-AMP and then transferred to the acceptor end of tRNA(Tyr). This chain is Tyrosine--tRNA ligase 1, cytoplasmic, found in Arabidopsis thaliana (Mouse-ear cress).